A 251-amino-acid polypeptide reads, in one-letter code: Imidazole glycerol phosphate synthase subunit HisF (251 aa).

Residues Asp11 and Asp130 contribute to the active site.

Belongs to the HisA/HisF family. Heterodimer of HisH and HisF.

The protein localises to the cytoplasm. The enzyme catalyses 5-[(5-phospho-1-deoxy-D-ribulos-1-ylimino)methylamino]-1-(5-phospho-beta-D-ribosyl)imidazole-4-carboxamide + L-glutamine = D-erythro-1-(imidazol-4-yl)glycerol 3-phosphate + 5-amino-1-(5-phospho-beta-D-ribosyl)imidazole-4-carboxamide + L-glutamate + H(+). The protein operates within amino-acid biosynthesis; L-histidine biosynthesis; L-histidine from 5-phospho-alpha-D-ribose 1-diphosphate: step 5/9. IGPS catalyzes the conversion of PRFAR and glutamine to IGP, AICAR and glutamate. The HisF subunit catalyzes the cyclization activity that produces IGP and AICAR from PRFAR using the ammonia provided by the HisH subunit. The protein is Imidazole glycerol phosphate synthase subunit HisF of Natranaerobius thermophilus (strain ATCC BAA-1301 / DSM 18059 / JW/NM-WN-LF).